The chain runs to 621 residues: Chaperone protein HscA homolog (621 aa).

It belongs to the heat shock protein 70 family.

Its function is as follows. Chaperone involved in the maturation of iron-sulfur cluster-containing proteins. Has a low intrinsic ATPase activity which is markedly stimulated by HscB. The sequence is that of Chaperone protein HscA homolog from Azotobacter vinelandii (strain DJ / ATCC BAA-1303).